Here is a 132-residue protein sequence, read N- to C-terminus: D-ribose pyranase (132 aa).

His-20 serves as the catalytic Proton donor. Substrate contacts are provided by residues Asp-28, His-99, and 121-123 (YSN).

It belongs to the RbsD / FucU family. RbsD subfamily. Homodecamer.

It localises to the cytoplasm. It catalyses the reaction beta-D-ribopyranose = beta-D-ribofuranose. It participates in carbohydrate metabolism; D-ribose degradation; D-ribose 5-phosphate from beta-D-ribopyranose: step 1/2. Catalyzes the interconversion of beta-pyran and beta-furan forms of D-ribose. This is D-ribose pyranase from Lactococcus lactis subsp. cremoris (strain MG1363).